A 606-amino-acid polypeptide reads, in one-letter code: Transmembrane 9 superfamily member 1 (606 aa).

Positions 1–27 are cleaved as a signal peptide; it reads MTVLGYPRSWSCHCLPVLILLLGIGHG. N-linked (GlcNAc...) asparagine glycosylation is present at Asn178. The next 4 membrane-spanning stretches (helical) occupy residues 237–257, 310–330, 339–359, and 373–393; these read LSII…AVIL, VLGV…MALL, GAIN…SGYV, and VWNI…TWSV. The N-linked (GlcNAc...) asparagine glycan is linked to Asn401. The next 4 membrane-spanning stretches (helical) occupy residues 412–432, 469–489, 499–519, and 535–555; these read ILLL…IGGI, VGGF…FATV, GILF…SIAL, and SVLS…FYYA. A glycan (N-linked (GlcNAc...) asparagine) is linked at Asn559. A helical transmembrane segment spans residues 570–590; it reads FGYSLLTGYVFFLMLGTISFF.

It belongs to the nonaspanin (TM9SF) (TC 9.A.2) family.

The protein resides in the lysosome membrane. It is found in the cytoplasmic vesicle. Its subcellular location is the autophagosome membrane. Functionally, plays an essential role in autophagy. In Mus musculus (Mouse), this protein is Transmembrane 9 superfamily member 1 (Tm9sf1).